We begin with the raw amino-acid sequence, 211 residues long: Succinate dehydrogenase subunit 4, mitochondrial (211 aa).

The N-terminal 36 residues, 1 to 36 (MASRLLARSKALALALSRADAAAPGPAAGVQWLRTL), are a transit peptide targeting the mitochondrion. The interval 41–64 (RDPAAAASPAPAPRQPAVGSPLGL) is disordered. Position 166 (His-166) interacts with heme. Residue Tyr-179 participates in a ubiquinone binding. A helical transmembrane segment spans residues 188-210 (WVFIYFKILLIIMAKETVVYFDL).

In terms of assembly, component of complex II composed of eight subunits in plants: four classical SDH subunits SDH1, SDH2, SDH3 and SDH4 (a flavoprotein (FP), an iron-sulfur protein (IP), and a cytochrome b composed of a large and a small subunit.), as well as four subunits unknown in mitochondria from bacteria and heterotrophic eukaryotes. It depends on heme as a cofactor.

The protein localises to the mitochondrion inner membrane. It participates in carbohydrate metabolism; tricarboxylic acid cycle. Membrane-anchoring subunit of succinate dehydrogenase (SDH). This Oryza sativa subsp. japonica (Rice) protein is Succinate dehydrogenase subunit 4, mitochondrial.